The primary structure comprises 176 residues: Peptide methionine sulfoxide reductase MsrA (176 aa).

Cysteine 12 is a catalytic residue.

This sequence belongs to the MsrA Met sulfoxide reductase family.

It catalyses the reaction L-methionyl-[protein] + [thioredoxin]-disulfide + H2O = L-methionyl-(S)-S-oxide-[protein] + [thioredoxin]-dithiol. The enzyme catalyses [thioredoxin]-disulfide + L-methionine + H2O = L-methionine (S)-S-oxide + [thioredoxin]-dithiol. Functionally, has an important function as a repair enzyme for proteins that have been inactivated by oxidation. Catalyzes the reversible oxidation-reduction of methionine sulfoxide in proteins to methionine. The sequence is that of Peptide methionine sulfoxide reductase MsrA from Thermus thermophilus (strain ATCC 27634 / DSM 579 / HB8).